Consider the following 467-residue polypeptide: Cysteine--tRNA ligase (467 aa).

Residue Cys29 coordinates Zn(2+). A 'HIGH' region motif is present at residues 31 to 41 (PTVYNYVHIGN). Zn(2+)-binding residues include Cys209, His234, and Glu238. Positions 267–271 (KMSKS) match the 'KMSKS' region motif. ATP is bound at residue Lys270.

Belongs to the class-I aminoacyl-tRNA synthetase family. As to quaternary structure, monomer. Zn(2+) is required as a cofactor.

It localises to the cytoplasm. It catalyses the reaction tRNA(Cys) + L-cysteine + ATP = L-cysteinyl-tRNA(Cys) + AMP + diphosphate. This is Cysteine--tRNA ligase from Xylella fastidiosa (strain Temecula1 / ATCC 700964).